The following is an 82-amino-acid chain: Exodeoxyribonuclease 7 small subunit (82 aa).

The protein belongs to the XseB family. As to quaternary structure, heterooligomer composed of large and small subunits.

It localises to the cytoplasm. The enzyme catalyses Exonucleolytic cleavage in either 5'- to 3'- or 3'- to 5'-direction to yield nucleoside 5'-phosphates.. In terms of biological role, bidirectionally degrades single-stranded DNA into large acid-insoluble oligonucleotides, which are then degraded further into small acid-soluble oligonucleotides. The chain is Exodeoxyribonuclease 7 small subunit from Mannheimia succiniciproducens (strain KCTC 0769BP / MBEL55E).